The chain runs to 596 residues: Elongation factor 4 (596 aa).

A tr-type G domain is found at 2–184 (KHIRNFSIIA…VIVAQIPSPE (183 aa)). GTP contacts are provided by residues 14 to 19 (DHGKST) and 131 to 134 (NKID).

This sequence belongs to the TRAFAC class translation factor GTPase superfamily. Classic translation factor GTPase family. LepA subfamily.

It localises to the cell inner membrane. It carries out the reaction GTP + H2O = GDP + phosphate + H(+). Required for accurate and efficient protein synthesis under certain stress conditions. May act as a fidelity factor of the translation reaction, by catalyzing a one-codon backward translocation of tRNAs on improperly translocated ribosomes. Back-translocation proceeds from a post-translocation (POST) complex to a pre-translocation (PRE) complex, thus giving elongation factor G a second chance to translocate the tRNAs correctly. Binds to ribosomes in a GTP-dependent manner. In Shewanella sediminis (strain HAW-EB3), this protein is Elongation factor 4.